The sequence spans 641 residues: Threonine--tRNA ligase (641 aa).

Residues 1-61 enclose the TGS domain; sequence MPAITLPDGS…DDDVQLEIVT (61 aa). Positions 242 to 533 are catalytic; it reads DHRRIGRAQN…LIEHYAGALP (292 aa). Zn(2+)-binding residues include C333, H384, and H510.

Belongs to the class-II aminoacyl-tRNA synthetase family. In terms of assembly, homodimer. The cofactor is Zn(2+).

The protein localises to the cytoplasm. It catalyses the reaction tRNA(Thr) + L-threonine + ATP = L-threonyl-tRNA(Thr) + AMP + diphosphate + H(+). In terms of biological role, catalyzes the attachment of threonine to tRNA(Thr) in a two-step reaction: L-threonine is first activated by ATP to form Thr-AMP and then transferred to the acceptor end of tRNA(Thr). Also edits incorrectly charged L-seryl-tRNA(Thr). The protein is Threonine--tRNA ligase of Alkalilimnicola ehrlichii (strain ATCC BAA-1101 / DSM 17681 / MLHE-1).